The primary structure comprises 464 residues: Phospho-2-dehydro-3-deoxyheptonate aldolase AroG (464 aa).

Residue Cys87 coordinates Mn(2+). Phosphoenolpyruvate is bound by residues Arg126, 285–286 (ER), Lys308, and Arg339. Residues His371, Glu413, and Asp443 each coordinate Mn(2+).

This sequence belongs to the class-II DAHP synthase family. Homodimer. Probably interacts with MSMEG_5536. Mn(2+) is required as a cofactor. It depends on Co(2+) as a cofactor. Requires Cd(2+) as cofactor.

It catalyses the reaction D-erythrose 4-phosphate + phosphoenolpyruvate + H2O = 7-phospho-2-dehydro-3-deoxy-D-arabino-heptonate + phosphate. The protein operates within metabolic intermediate biosynthesis; chorismate biosynthesis; chorismate from D-erythrose 4-phosphate and phosphoenolpyruvate: step 1/7. Catalyzes an aldol-like condensation reaction between phosphoenolpyruvate (PEP) and D-erythrose 4-phosphate (E4P) to generate 3-deoxy-D-arabino-heptulosonate 7-phosphate (DAH7P) and inorganic phosphate. The sequence is that of Phospho-2-dehydro-3-deoxyheptonate aldolase AroG (aroG) from Mycolicibacterium smegmatis (strain ATCC 700084 / mc(2)155) (Mycobacterium smegmatis).